The sequence spans 304 residues: Ornithine carbamoyltransferase (304 aa).

Residues 51 to 54, glutamine 78, arginine 102, and 129 to 132 each bind carbamoyl phosphate; these read STRT and HPVQ. Residues asparagine 157, aspartate 221, and 225-226 each bind L-ornithine; that span reads SM. Carbamoyl phosphate is bound by residues 261 to 262 and arginine 289; that span reads CL.

The protein belongs to the aspartate/ornithine carbamoyltransferase superfamily. OTCase family.

Its subcellular location is the cytoplasm. The catalysed reaction is carbamoyl phosphate + L-ornithine = L-citrulline + phosphate + H(+). It participates in amino-acid degradation; L-arginine degradation via ADI pathway; carbamoyl phosphate from L-arginine: step 2/2. Reversibly catalyzes the transfer of the carbamoyl group from carbamoyl phosphate (CP) to the N(epsilon) atom of ornithine (ORN) to produce L-citrulline. The protein is Ornithine carbamoyltransferase of Campylobacter curvus (strain 525.92).